Consider the following 182-residue polypeptide: MTQYFRALAFFLLLVPATAMACDGWPSWARGACQRVDQIWNEGGNDLYLTGYSWHNRAMYSSDKIRSFNELAWGGGLGKSIYDEDGDWQGLYAMAFLDSHSDIEPIAGYGFQKIGRIGADTRLGIGYTVFLTSRSDIMSRVPFPGILPLVSAGYRDATLYATYIPGGKGNGNVLFMFGRWEF.

A signal peptide spans 1–21; the sequence is MTQYFRALAFFLLLVPATAMA. A lipid anchor (N-palmitoyl cysteine) is attached at Cys-22. Cys-22 is lipidated: S-diacylglycerol cysteine. Residues His-55, Asp-98, and Ser-99 contribute to the active site.

The protein belongs to the lipid A palmitoyltransferase family. As to quaternary structure, homodimer.

It localises to the cell outer membrane. The catalysed reaction is a lipid A + a 1,2-diacyl-sn-glycero-3-phosphocholine = a hepta-acyl lipid A + a 2-acyl-sn-glycero-3-phosphocholine. It carries out the reaction a lipid IVA + a 1,2-diacyl-sn-glycero-3-phosphocholine = a lipid IVB + a 2-acyl-sn-glycero-3-phosphocholine. It catalyses the reaction a lipid IIA + a 1,2-diacyl-sn-glycero-3-phosphocholine = a lipid IIB + a 2-acyl-sn-glycero-3-phosphocholine. Its function is as follows. Transfers a fatty acid residue from the sn-1 position of a phospholipid to the N-linked hydroxyfatty acid chain on the proximal unit of lipid A or its precursors. Required for resistance to cationic antimicrobial peptides (CAMPs). Modifications of lipid A with an acyl chain to evade host immune defenses by resisting antibody-mediated complement lysis during respiratory infection. The polypeptide is Lipid A acyltransferase PagP (Bordetella bronchiseptica (strain ATCC BAA-588 / NCTC 13252 / RB50) (Alcaligenes bronchisepticus)).